The sequence spans 255 residues: Thiazole synthase (255 aa).

Lys-95 serves as the catalytic Schiff-base intermediate with DXP. Residues Gly-156, 182 to 183, and 204 to 205 contribute to the 1-deoxy-D-xylulose 5-phosphate site; these read AG and NT.

The protein belongs to the ThiG family. Homotetramer. Forms heterodimers with either ThiH or ThiS.

The protein localises to the cytoplasm. It catalyses the reaction [ThiS sulfur-carrier protein]-C-terminal-Gly-aminoethanethioate + 2-iminoacetate + 1-deoxy-D-xylulose 5-phosphate = [ThiS sulfur-carrier protein]-C-terminal Gly-Gly + 2-[(2R,5Z)-2-carboxy-4-methylthiazol-5(2H)-ylidene]ethyl phosphate + 2 H2O + H(+). It participates in cofactor biosynthesis; thiamine diphosphate biosynthesis. Catalyzes the rearrangement of 1-deoxy-D-xylulose 5-phosphate (DXP) to produce the thiazole phosphate moiety of thiamine. Sulfur is provided by the thiocarboxylate moiety of the carrier protein ThiS. In vitro, sulfur can be provided by H(2)S. The chain is Thiazole synthase from Photorhabdus laumondii subsp. laumondii (strain DSM 15139 / CIP 105565 / TT01) (Photorhabdus luminescens subsp. laumondii).